Consider the following 327-residue polypeptide: Phenylalanine--tRNA ligase alpha subunit (327 aa).

Residue Glu-252 participates in Mg(2+) binding.

This sequence belongs to the class-II aminoacyl-tRNA synthetase family. Phe-tRNA synthetase alpha subunit type 1 subfamily. As to quaternary structure, tetramer of two alpha and two beta subunits. The cofactor is Mg(2+).

Its subcellular location is the cytoplasm. The enzyme catalyses tRNA(Phe) + L-phenylalanine + ATP = L-phenylalanyl-tRNA(Phe) + AMP + diphosphate + H(+). This Photobacterium profundum (strain SS9) protein is Phenylalanine--tRNA ligase alpha subunit.